We begin with the raw amino-acid sequence, 220 residues long: Probable cytidylate kinase (220 aa).

Residue 10 to 18 participates in ATP binding; that stretch reads GPAASGKSS.

This sequence belongs to the cytidylate kinase family. Type 1 subfamily.

The catalysed reaction is CMP + ATP = CDP + ADP. It catalyses the reaction dCMP + ATP = dCDP + ADP. The protein is Probable cytidylate kinase of Encephalitozoon cuniculi (strain GB-M1) (Microsporidian parasite).